We begin with the raw amino-acid sequence, 876 residues long: GRB2-associated and regulator of MAPK protein (876 aa).

Residues lysine 12–glutamate 320 form a CABIT region. Residue tyrosine 105 is modified to Phosphotyrosine. Residues glycine 427 to lysine 448 form a disordered region. Tyrosine 453 is subject to Phosphotyrosine. 2 disordered regions span residues glutamate 460 to glycine 501 and leucine 530 to serine 572. Residues alanine 498 to proline 550 are necessary for interaction with GRB2. Polar residues predominate over residues glutamine 560 to serine 572. Serine 609 and serine 613 each carry phosphoserine. Polar residues-rich tracts occupy residues serine 630–serine 639 and arginine 647–proline 657. Disordered stretches follow at residues serine 630 to cysteine 664 and cysteine 722 to serine 759. The SAM domain occupies leucine 811–isoleucine 876.

This sequence belongs to the GAREM family. As to quaternary structure, interacts with EGFR. Interacts (via proline-rich domain and phosphorylated at Tyr-105 and Tyr-453) with GRB2 (via SH3 domains); the interaction occurs upon EGF stimulation. Interacts (phosphorylated at Tyr-453) with PTPN11; the interaction increases MAPK/ERK activity and does not affect the GRB2/SOS complex formation. Post-translationally, on EGF stimulation, phosphorylated on Tyr-105 and Tyr-453.

Its function is as follows. Acts as an adapter protein that plays a role in intracellular signaling cascades triggered either by the cell surface activated epidermal growth factor receptor and/or cytoplasmic protein tyrosine kinases. Promotes activation of the MAPK/ERK signaling pathway. Plays a role in the regulation of cell proliferation. The polypeptide is GRB2-associated and regulator of MAPK protein (Garem1) (Mus musculus (Mouse)).